A 282-amino-acid polypeptide reads, in one-letter code: Shikimate dehydrogenase (NADP(+)) (282 aa).

Shikimate contacts are provided by residues 16–18 (SLS) and Thr-63. Lys-67 acts as the Proton acceptor in catalysis. 2 residues coordinate shikimate: Asn-88 and Asp-103. Residues 128–132 (GAGGA) and Gly-243 contribute to the NADP(+) site.

It belongs to the shikimate dehydrogenase family. In terms of assembly, homodimer.

It carries out the reaction shikimate + NADP(+) = 3-dehydroshikimate + NADPH + H(+). The protein operates within metabolic intermediate biosynthesis; chorismate biosynthesis; chorismate from D-erythrose 4-phosphate and phosphoenolpyruvate: step 4/7. In terms of biological role, involved in the biosynthesis of the chorismate, which leads to the biosynthesis of aromatic amino acids. Catalyzes the reversible NADPH linked reduction of 3-dehydroshikimate (DHSA) to yield shikimate (SA). The protein is Shikimate dehydrogenase (NADP(+)) of Xylella fastidiosa (strain 9a5c).